We begin with the raw amino-acid sequence, 122 residues long: Large ribosomal subunit protein uL14 (122 aa).

This sequence belongs to the universal ribosomal protein uL14 family. In terms of assembly, part of the 50S ribosomal subunit. Forms a cluster with proteins L3 and L19. In the 70S ribosome, L14 and L19 interact and together make contacts with the 16S rRNA in bridges B5 and B8.

In terms of biological role, binds to 23S rRNA. Forms part of two intersubunit bridges in the 70S ribosome. This is Large ribosomal subunit protein uL14 from Corynebacterium glutamicum (strain R).